Here is a 129-residue protein sequence, read N- to C-terminus: Large ribosomal subunit protein bL20 (129 aa).

This sequence belongs to the bacterial ribosomal protein bL20 family.

Binds directly to 23S ribosomal RNA and is necessary for the in vitro assembly process of the 50S ribosomal subunit. It is not involved in the protein synthesizing functions of that subunit. The polypeptide is Large ribosomal subunit protein bL20 (Mycobacterium marinum (strain ATCC BAA-535 / M)).